Here is a 508-residue protein sequence, read N- to C-terminus: Fc receptor-like protein 2 (508 aa).

The N-terminal stretch at 1–19 (MLLWSLLVIFDAVTEQADS) is a signal peptide. Ig-like C2-type domains lie at 20 to 98 (LTLV…SNIV), 109 to 187 (PVLT…HRIR), 201 to 290 (PISN…KVVN), and 300 to 387 (PVLT…VSIS). Topologically, residues 20–401 (LTLVAPSSVF…YRRDLMTAGV (382 aa)) are extracellular. Cys-128 and Cys-177 are oxidised to a cystine. Residues Asn-204, Asn-234, Asn-343, Asn-355, and Asn-365 are each glycosylated (N-linked (GlcNAc...) asparagine). 2 cysteine pairs are disulfide-bonded: Cys-226-Cys-275 and Cys-321-Cys-368. A helical transmembrane segment spans residues 402-422 (LWGLFGVLGFTGVALLLYALF). The Cytoplasmic segment spans residues 423–508 (HKISGESSAT…QVIYSSVKKS (86 aa)). The tract at residues 429–453 (SSATNEPRGASRPNPQEFTYSSPTP) is disordered. Positions 441 to 452 (PNPQEFTYSSPT) are enriched in polar residues. 4 consecutive short sequence motifs (ITIM motif) follow at residues 446–451 (FTYSSP), 460–465 (PVYVNV), 472–477 (VVYSQV), and 500–505 (VIYSSV).

As to quaternary structure, the tyrosine-phosphorylated isoform 2 interacts with PTPN6. In terms of processing, isoform 2 is N- and O-glycosylated, and phosphorylated. As to expression, expressed in the secondary lymphoid organs, spleen and lymph node. Expression is limited to the mature B-cell lines. Highly expressed in CD19 and within the mantle zones of the tonsil tissue. Isoform 2 is expressed in the spleen, peripheral blood and bone marrow. Isoform 2 and isoform 4 are expressed in B-cell lines. Preferentially expressed in memory B-cells (at protein level).

The protein localises to the cell membrane. May have an regulatory role in normal and neoplastic B cell development. The sequence is that of Fc receptor-like protein 2 (FCRL2) from Homo sapiens (Human).